Consider the following 477-residue polypeptide: Glutamate--tRNA ligase (477 aa).

Positions 8–18 (PSPTGTLHIGT) match the 'HIGH' region motif. The short motif at 247–251 (KLSKR) is the 'KMSKS' region element. K250 serves as a coordination point for ATP.

The protein belongs to the class-I aminoacyl-tRNA synthetase family. Glutamate--tRNA ligase type 1 subfamily. In terms of assembly, monomer.

It localises to the cytoplasm. It catalyses the reaction tRNA(Glu) + L-glutamate + ATP = L-glutamyl-tRNA(Glu) + AMP + diphosphate. Catalyzes the attachment of glutamate to tRNA(Glu) in a two-step reaction: glutamate is first activated by ATP to form Glu-AMP and then transferred to the acceptor end of tRNA(Glu). The polypeptide is Glutamate--tRNA ligase (Parasynechococcus marenigrum (strain WH8102)).